The sequence spans 383 residues: 2-methylcitrate synthase 2 (383 aa).

Substrate contacts are provided by arginine 73 and histidine 195. The active site involves histidine 230. 263 to 267 (VVMGF) is a binding site for CoA. Histidine 269 is a catalytic residue. Residue arginine 278 participates in substrate binding. Aspartate 320 is a catalytic residue. Substrate is bound by residues arginine 345 and arginine 364.

This sequence belongs to the citrate synthase family. Homodimer.

It carries out the reaction propanoyl-CoA + oxaloacetate + H2O = (2S,3S)-2-methylcitrate + CoA + H(+). It catalyses the reaction oxaloacetate + acetyl-CoA + H2O = citrate + CoA + H(+). It participates in organic acid metabolism; propanoate degradation. It functions in the pathway carbohydrate metabolism; tricarboxylic acid cycle; isocitrate from oxaloacetate: step 1/2. Its function is as follows. Involved in the catabolism of short chain fatty acids (SCFA) via the tricarboxylic acid (TCA)(acetyl degradation route) and via the 2-methylcitrate cycle I (propionate degradation route). Catalyzes the Claisen condensation of propionyl-CoA and oxaloacetate (OAA) to yield 2-methylcitrate (2-MC) and CoA. Also catalyzes the condensation of oxaloacetate with acetyl-CoA but with a lower specificity. The protein is 2-methylcitrate synthase 2 (prpC2) of Corynebacterium glutamicum (strain ATCC 13032 / DSM 20300 / JCM 1318 / BCRC 11384 / CCUG 27702 / LMG 3730 / NBRC 12168 / NCIMB 10025 / NRRL B-2784 / 534).